A 153-amino-acid polypeptide reads, in one-letter code: UPF0756 membrane protein lin1603 (153 aa).

A run of 4 helical transmembrane segments spans residues 6–26 (MLFL…SLII), 54–74 (WGVT…QIGF), 80–100 (SFKS…SILA), and 117–137 (LVFG…GPVI).

It belongs to the UPF0756 family.

The protein resides in the cell membrane. In Listeria innocua serovar 6a (strain ATCC BAA-680 / CLIP 11262), this protein is UPF0756 membrane protein lin1603.